The primary structure comprises 1515 residues: Metal resistance protein YCF1 (1515 aa).

Over 1 to 32 (MAGNLVSWACKLCRSPEGFGPISFYGDFTQCF) the chain is Vacuolar. The helical transmembrane segment at 33 to 53 (IDGVILNLSAIFMITFGIRDL) threads the bilayer. Residues 54–73 (VNLCKKKHSGIKYRRNWIIV) lie on the Cytoplasmic side of the membrane. The chain crosses the membrane as a helical span at residues 74 to 94 (SRMALVLLEIAFVSLASLNIS). The Vacuolar portion of the chain corresponds to 95-99 (KEEAE). The helical transmembrane segment at 100–120 (NFTIVSQYASTMLSLFVALAL) threads the bilayer. At 121–130 (HWIEYDRSVV) the chain is on the cytoplasmic side. A helical membrane pass occupies residues 131–151 (ANTVLLFYWLFETFGNFAKLI). Residues 152 to 169 (NILIRHTYEGIWYSGQTG) are Vacuolar-facing. Residues 170-190 (FILTLFQVITCASILLLEALP) form a helical membrane-spanning segment. The Cytoplasmic segment spans residues 191-278 (KKPLMPHQHI…QKSNPSLSWA (88 aa)). Residue Ser251 is modified to Phosphoserine. Residues 279–299 (ICRTFGSKMLLAAFFKAIHDV) traverse the membrane as a helical segment. In terms of domain architecture, ABC transmembrane type-1 1 spans 287-590 (MLLAAFFKAI…IPMVLNSFIE (304 aa)). Residues 300–345 (LAFTQPQLLRILIKFVTDYNSERQDDHSSLQGFENNHPQKLPIVRG) are Vacuolar-facing. The chain crosses the membrane as a helical span at residues 346–366 (FLIAFAMFLVGFTQTSVLHQY). Residues 367 to 422 (FLNVFNTGMYIKSALTALIYQKSLVLSNEASGLSSTGDIVNLMSVDVQKLQDLTQW) lie on the Cytoplasmic side of the membrane. A helical membrane pass occupies residues 423-443 (LNLIWSGPFQIIICLYSLYKL). At 444–446 (LGN) the chain is on the vacuolar side. Residues 447–467 (SMWVGVIILVIMMPLNSFLMR) form a helical membrane-spanning segment. Topologically, residues 468–530 (IQKKLQKSQM…NLTKLGCYMA (63 aa)) are cytoplasmic. Residues 531-551 (VTSFQFNIVPFLVSCCTFAVF) traverse the membrane as a helical segment. The Vacuolar segment spans residues 552–572 (VYTEDRALTTDLVFPALTLFN). A helical membrane pass occupies residues 573–593 (LLSFPLMIIPMVLNSFIEASV). The Cytoplasmic portion of the chain corresponds to 594–943 (SIGRLFTFFT…VKWNIYLEYA (350 aa)). The region spanning 626 to 853 (INIGDDATFL…ADSPLWKLLN (228 aa)) is the ABC transporter 1 domain. An ATP-binding site is contributed by 663–670 (GKVGSGKT). Phosphoserine is present on residues Ser873, Ser903, and Ser908. At Thr911 the chain carries Phosphothreonine. The residue at position 914 (Ser914) is a Phosphoserine. Residues 944 to 964 (KACNPKSVCVFILFIVISMFL) form a helical membrane-spanning segment. The ABC transmembrane type-1 2 domain maps to 951–1235 (VCVFILFIVI…IVRMTVEVET (285 aa)). Topologically, residues 965 to 1001 (SVMGNVWLKHWSEVNSRYGSNPNAARYLAIYFALGIG) are vacuolar. A helical transmembrane segment spans residues 1002-1023 (SALATLIQTIVLWVFCTIHASK). Residues 1024–1066 (YLHNLMTNSVLRAPMTFFETTPIGRILNRFSNDIYKVDALLGR) lie on the Cytoplasmic side of the membrane. Residues 1067–1087 (TFSQFFVNAVKVTFTITVICA) traverse the membrane as a helical segment. Residue Thr1088 is a topological domain, vacuolar. A helical transmembrane segment spans residues 1089–1109 (TWQFIFIIIPLSVFYIYYQQY). Over 1110-1180 (YLRTSRELRR…NANRWLAYRL (71 aa)) the chain is Cytoplasmic. A helical membrane pass occupies residues 1181–1201 (ELIGSIIILGAATLSVFRLKQ). The Vacuolar segment spans residues 1202 to 1205 (GTLT). A helical transmembrane segment spans residues 1206–1226 (AGMVGLSLSYALQITQTLNWI). At 1227 to 1515 (VRMTVEVETN…CMEAGLVNEN (289 aa)) the chain is on the cytoplasmic side. The 236-residue stretch at 1272–1507 (IKFNNYSTRY…NKSLFYSLCM (236 aa)) folds into the ABC transporter 2 domain. 1306-1313 (GRTGAGKS) contacts ATP.

This sequence belongs to the ABC transporter superfamily. ABCC family. Conjugate transporter (TC 3.A.1.208) subfamily.

The protein localises to the vacuole membrane. It carries out the reaction Cd(2+)(in) + ATP + H2O = Cd(2+)(out) + ADP + phosphate + H(+). It catalyses the reaction an S-substituted glutathione(in) + ATP + H2O = an S-substituted glutathione(out) + ADP + phosphate + H(+). Functionally, cooperates for the ATP-dependent vacuolar transport of bilirubin and glutathione conjugates. This Saccharomyces cerevisiae (strain ATCC 204508 / S288c) (Baker's yeast) protein is Metal resistance protein YCF1 (YCF1).